The primary structure comprises 524 residues: FAD-dependent monooxygenase opdD (524 aa).

The FAD site is built by glutamate 48 and arginine 145.

The protein belongs to the paxM FAD-dependent monooxygenase family.

It functions in the pathway secondary metabolite biosynthesis. In terms of biological role, FAD-dependent monooxygenase; part of the gene cluster that mediates the biosynthesis of oxopyrrolidines, polyketide-amino acid hybrid compounds with feature structures of tetramic acid. Does not seem to play a role in oxopyrrolidines A and B biosynthesis. May be involved in further modifications of these oxopyrrolidines. This Penicillium oxalicum (strain 114-2 / CGMCC 5302) (Penicillium decumbens) protein is FAD-dependent monooxygenase opdD.